The chain runs to 120 residues: Cell division protein FtsL (120 aa).

The segment at 1–22 (MSNVAYKSNLEPNRVHREAEQP) is disordered. The Cytoplasmic segment spans residues 1 to 37 (MSNVAYKSNLEPNRVHREAEQPKKQILKRGQMTLGEK). The span at 13 to 22 (NRVHREAEQP) shows a compositional bias: basic and acidic residues. The helical transmembrane segment at 38-58 (VIITIALAIVLVVAFRIISVQ) threads the bilayer. Residues 59-120 (AQIYTVNQEI…GDNVKVVDGQ (62 aa)) lie on the Extracellular side of the membrane.

Belongs to the FtsL family.

It localises to the cell membrane. In terms of biological role, essential cell division protein. This chain is Cell division protein FtsL, found in Listeria monocytogenes serovar 1/2a (strain ATCC BAA-679 / EGD-e).